Consider the following 1103-residue polypeptide: Ataxin-2 homolog (1103 aa).

A compositionally biased stretch (basic residues) spans 1 to 10 (MSQSKDKKKF). Positions 1–75 (MSQSKDKKKF…QQQQQQQQPF (75 aa)) are disordered. The segment covering 11 to 28 (VGGGGGGGGNNSGGGGYG) has biased composition (gly residues). Composition is skewed to low complexity over residues 33–44 (NNNNNNRNSSNN) and 56–73 (HHQQ…QQQQ). The Sm domain maps to 84 to 166 (RTVFMSMSLV…FLQITATGVV (83 aa)). The stretch at 258 to 287 (EFYKINQSVAEKKAQEIENEKSGNIHLLEE) forms a coiled coil. 5 disordered regions span residues 305–474 (VVRK…RESP), 516–557 (TNKS…APKS), 615–763 (LVIK…NNTT), 901–920 (HTMK…VQPQ), and 930–1103 (QPQG…NQYH). Low complexity predominate over residues 312 to 356 (PTSTTSTTTSPPTQNPTPSSSVYIPPSKRNNNNNTPSTPSVTSPP). The segment covering 358–371 (VDKKHQQTHQDKKQ) has biased composition (basic and acidic residues). Positions 366–403 (HQDKKQTQQQQQQQQQQQQQQQQQQQQQQQQQQQQQTQ) form a coiled coil. The segment covering 372–463 (TQQQQQQQQQ…NNTPTATNTN (92 aa)) has biased composition (low complexity). Positions 516-529 (TNKSMNKSGSNIST) are enriched in polar residues. 3 stretches are compositionally biased toward low complexity: residues 530 to 544 (TPVN…NGTP), 637 to 676 (PTQL…TPST), and 683 to 694 (TTTPITTTILTE). Positions 691 to 730 (ILTENKSDDKEKEKEKEKEKVDEKEKEKEKEKSDEKDKDQ) form a coiled coil. Over residues 695–741 (NKSDDKEKEKEKEKEKVDEKEKEKEKEKSDEKDKDQSSTLVEKKDES) the composition is skewed to basic and acidic residues. Positions 742 to 763 (SSSSNTTTTTTNTTNNNNNNTT) are enriched in low complexity. Positions 930 to 957 (QPQGGVVQPSAGGAPKTMYQQQQQQQQQ) are enriched in low complexity. The span at 960–969 (QPGGPMGVQR) shows a compositional bias: gly residues. Over residues 974-984 (PPQQQPQQQQQ) the composition is skewed to low complexity. Pro residues predominate over residues 1020 to 1031 (YAVPHPQYPMPP). Over residues 1062–1076 (QVVSQNSPQQDSPSN) the composition is skewed to low complexity.

The protein belongs to the ataxin-2 family.

In Dictyostelium discoideum (Social amoeba), this protein is Ataxin-2 homolog (atxn2).